The sequence spans 580 residues: Laccase-20 (580 aa).

The N-terminal stretch at 1–23 is a signal peptide; it reads MVASLLCTVAVAVLAVAAVGGEA. Plastocyanin-like domains follow at residues 31 to 147 and 156 to 310; these read VVHE…PRDG and KDVP…YTSA. N-linked (GlcNAc...) asparagine glycans are attached at residues asparagine 36 and asparagine 42. Cu cation contacts are provided by histidine 81 and histidine 83. The N-linked (GlcNAc...) asparagine glycan is linked to asparagine 115. Cu cation contacts are provided by histidine 126 and histidine 128. Residues asparagine 200, asparagine 339, asparagine 392, asparagine 429, and asparagine 460 are each glycosylated (N-linked (GlcNAc...) asparagine). Residues 419 to 561 enclose the Plastocyanin-like 3 domain; sequence DFPVRPPRPY…ATAFIVEDGP (143 aa). Asparagine 478, histidine 481, histidine 483, histidine 540, cysteine 541, histidine 542, histidine 546, and methionine 551 together coordinate Cu cation. Residues 560-580 form a disordered region; sequence GPTPETSLPPPPPEFKRCDAS.

It belongs to the multicopper oxidase family. The cofactor is Cu cation.

Its subcellular location is the secreted. The protein localises to the extracellular space. It is found in the apoplast. The enzyme catalyses 4 hydroquinone + O2 = 4 benzosemiquinone + 2 H2O. Its function is as follows. Lignin degradation and detoxification of lignin-derived products. This is Laccase-20 (LAC20) from Oryza sativa subsp. indica (Rice).